Reading from the N-terminus, the 447-residue chain is N-succinylarginine dihydrolase (447 aa).

Residues A19–S28, N110, and H137–R138 each bind substrate. E174 is an active-site residue. Residue R212 participates in substrate binding. The active site involves H248. Residues D250 and N359 each coordinate substrate. Residue C365 is the Nucleophile of the active site.

It belongs to the succinylarginine dihydrolase family. In terms of assembly, homodimer.

The enzyme catalyses N(2)-succinyl-L-arginine + 2 H2O + 2 H(+) = N(2)-succinyl-L-ornithine + 2 NH4(+) + CO2. It functions in the pathway amino-acid degradation; L-arginine degradation via AST pathway; L-glutamate and succinate from L-arginine: step 2/5. Catalyzes the hydrolysis of N(2)-succinylarginine into N(2)-succinylornithine, ammonia and CO(2). The sequence is that of N-succinylarginine dihydrolase from Escherichia coli (strain SE11).